The chain runs to 180 residues: NAD(P)H-quinone oxidoreductase subunit 6, chloroplastic (180 aa).

Transmembrane regions (helical) follow at residues 10-30 (LLLA…VLLT), 32-52 (IIYS…FYII), 57-77 (FVAV…ILFA), 102-122 (IVCT…SWFG), and 153-173 (FLPF…AITI).

Belongs to the complex I subunit 6 family. As to quaternary structure, NDH is composed of at least 16 different subunits, 5 of which are encoded in the nucleus.

The protein localises to the plastid. It localises to the chloroplast thylakoid membrane. The enzyme catalyses a plastoquinone + NADH + (n+1) H(+)(in) = a plastoquinol + NAD(+) + n H(+)(out). It catalyses the reaction a plastoquinone + NADPH + (n+1) H(+)(in) = a plastoquinol + NADP(+) + n H(+)(out). NDH shuttles electrons from NAD(P)H:plastoquinone, via FMN and iron-sulfur (Fe-S) centers, to quinones in the photosynthetic chain and possibly in a chloroplast respiratory chain. The immediate electron acceptor for the enzyme in this species is believed to be plastoquinone. Couples the redox reaction to proton translocation, and thus conserves the redox energy in a proton gradient. The sequence is that of NAD(P)H-quinone oxidoreductase subunit 6, chloroplastic (ndhG) from Cryptomeria japonica (Japanese cedar).